A 148-amino-acid chain; its full sequence is ATP synthase epsilon chain (148 aa).

Belongs to the ATPase epsilon chain family. As to quaternary structure, F-type ATPases have 2 components, CF(1) - the catalytic core - and CF(0) - the membrane proton channel. CF(1) has five subunits: alpha(3), beta(3), gamma(1), delta(1), epsilon(1). CF(0) has three main subunits: a, b and c.

It localises to the cell membrane. Functionally, produces ATP from ADP in the presence of a proton gradient across the membrane. This chain is ATP synthase epsilon chain, found in Streptococcus thermophilus (strain ATCC BAA-250 / LMG 18311).